A 351-amino-acid polypeptide reads, in one-letter code: Nicotinate-nucleotide--dimethylbenzimidazole phosphoribosyltransferase (351 aa).

Glutamate 317 functions as the Proton acceptor in the catalytic mechanism.

The protein belongs to the CobT family.

It catalyses the reaction 5,6-dimethylbenzimidazole + nicotinate beta-D-ribonucleotide = alpha-ribazole 5'-phosphate + nicotinate + H(+). It functions in the pathway nucleoside biosynthesis; alpha-ribazole biosynthesis; alpha-ribazole from 5,6-dimethylbenzimidazole: step 1/2. Catalyzes the synthesis of alpha-ribazole-5'-phosphate from nicotinate mononucleotide (NAMN) and 5,6-dimethylbenzimidazole (DMB). The sequence is that of Nicotinate-nucleotide--dimethylbenzimidazole phosphoribosyltransferase from Pseudomonas putida (strain GB-1).